Here is a 205-residue protein sequence, read N- to C-terminus: Thiamine-phosphate synthase (205 aa).

4-amino-2-methyl-5-(diphosphooxymethyl)pyrimidine-binding positions include 37 to 41 (QVREK) and asparagine 69. Residues aspartate 70 and aspartate 89 each contribute to the Mg(2+) site. Residue serine 108 coordinates 4-amino-2-methyl-5-(diphosphooxymethyl)pyrimidine. 134 to 136 (TGS) is a binding site for 2-[(2R,5Z)-2-carboxy-4-methylthiazol-5(2H)-ylidene]ethyl phosphate. Lysine 137 serves as a coordination point for 4-amino-2-methyl-5-(diphosphooxymethyl)pyrimidine. 2-[(2R,5Z)-2-carboxy-4-methylthiazol-5(2H)-ylidene]ethyl phosphate contacts are provided by residues glycine 165 and 185–186 (IS).

This sequence belongs to the thiamine-phosphate synthase family. It depends on Mg(2+) as a cofactor.

The catalysed reaction is 2-[(2R,5Z)-2-carboxy-4-methylthiazol-5(2H)-ylidene]ethyl phosphate + 4-amino-2-methyl-5-(diphosphooxymethyl)pyrimidine + 2 H(+) = thiamine phosphate + CO2 + diphosphate. It carries out the reaction 2-(2-carboxy-4-methylthiazol-5-yl)ethyl phosphate + 4-amino-2-methyl-5-(diphosphooxymethyl)pyrimidine + 2 H(+) = thiamine phosphate + CO2 + diphosphate. It catalyses the reaction 4-methyl-5-(2-phosphooxyethyl)-thiazole + 4-amino-2-methyl-5-(diphosphooxymethyl)pyrimidine + H(+) = thiamine phosphate + diphosphate. The protein operates within cofactor biosynthesis; thiamine diphosphate biosynthesis; thiamine phosphate from 4-amino-2-methyl-5-diphosphomethylpyrimidine and 4-methyl-5-(2-phosphoethyl)-thiazole: step 1/1. Condenses 4-methyl-5-(beta-hydroxyethyl)thiazole monophosphate (THZ-P) and 2-methyl-4-amino-5-hydroxymethyl pyrimidine pyrophosphate (HMP-PP) to form thiamine monophosphate (TMP). This chain is Thiamine-phosphate synthase, found in Clostridium botulinum (strain Langeland / NCTC 10281 / Type F).